The sequence spans 274 residues: ATP synthase subunit delta (274 aa).

This sequence belongs to the ATPase delta chain family. F-type ATPases have 2 components, F(1) - the catalytic core - and F(0) - the membrane proton channel. F(1) has five subunits: alpha(3), beta(3), gamma(1), delta(1), epsilon(1). F(0) has three main subunits: a(1), b(2) and c(10-14). The alpha and beta chains form an alternating ring which encloses part of the gamma chain. F(1) is attached to F(0) by a central stalk formed by the gamma and epsilon chains, while a peripheral stalk is formed by the delta and b chains.

The protein resides in the cell membrane. In terms of biological role, f(1)F(0) ATP synthase produces ATP from ADP in the presence of a proton or sodium gradient. F-type ATPases consist of two structural domains, F(1) containing the extramembraneous catalytic core and F(0) containing the membrane proton channel, linked together by a central stalk and a peripheral stalk. During catalysis, ATP synthesis in the catalytic domain of F(1) is coupled via a rotary mechanism of the central stalk subunits to proton translocation. Its function is as follows. This protein is part of the stalk that links CF(0) to CF(1). It either transmits conformational changes from CF(0) to CF(1) or is implicated in proton conduction. This Streptomyces coelicolor (strain ATCC BAA-471 / A3(2) / M145) protein is ATP synthase subunit delta.